The following is a 51-amino-acid chain: Large ribosomal subunit protein bL33 (51 aa).

The tract at residues M1–R24 is disordered.

Belongs to the bacterial ribosomal protein bL33 family.

This chain is Large ribosomal subunit protein bL33, found in Cellvibrio japonicus (strain Ueda107) (Pseudomonas fluorescens subsp. cellulosa).